The primary structure comprises 536 residues: Dual specificity calcium/calmodulin-dependent 3',5'-cyclic nucleotide phosphodiesterase 1B (536 aa).

Residues 1–20 (MELSPRSPPEMLEESDCPSP) are disordered. A phosphoserine mark is found at serine 7 and serine 15. Calmodulin-binding regions lie at residues 27-47 (PSKK…KQLE) and 118-141 (EKPK…MFRR). In terms of domain architecture, PDEase spans 146 to 503 (VGPTYSTAVL…QKWKERAASG (358 aa)). Catalysis depends on histidine 223, which acts as the Proton donor. Residues histidine 227, histidine 263, aspartate 264, and aspartate 370 each contribute to the Zn(2+) site. Aspartate 264 contributes to the Mg(2+) binding site. 2 disordered regions span residues 447–474 (LADE…VGDP) and 494–536 (QKWK…GNLD). Positions 455–464 (KNQPSFQWRQ) are enriched in polar residues. Serine 466 and serine 514 each carry phosphoserine.

This sequence belongs to the cyclic nucleotide phosphodiesterase family. PDE1 subfamily. Homodimer. Requires Zn(2+) as cofactor. Mg(2+) serves as cofactor.

The protein localises to the cytoplasm. It is found in the cytosol. The enzyme catalyses a nucleoside 3',5'-cyclic phosphate + H2O = a nucleoside 5'-phosphate + H(+). The catalysed reaction is 3',5'-cyclic GMP + H2O = GMP + H(+). It carries out the reaction 3',5'-cyclic AMP + H2O = AMP + H(+). Its activity is regulated as follows. Type I PDE are activated by the binding of calmodulin in the presence of Ca(2+). Functionally, cyclic nucleotide phosphodiesterase with a dual specificity for the second messengers cAMP and cGMP, which are key regulators of many important physiological processes. Has a preference for cGMP as a substrate. This chain is Dual specificity calcium/calmodulin-dependent 3',5'-cyclic nucleotide phosphodiesterase 1B, found in Homo sapiens (Human).